Consider the following 78-residue polypeptide: MALNKKGAKRRRKKVCAFCADKSSSIDYKDVNKLRKYVTERGKILPRRISGNCAKHQRELTLAIKRARNVALLPFTTD.

The protein belongs to the bacterial ribosomal protein bS18 family. In terms of assembly, part of the 30S ribosomal subunit. Forms a tight heterodimer with protein bS6.

Binds as a heterodimer with protein bS6 to the central domain of the 16S rRNA, where it helps stabilize the platform of the 30S subunit. The sequence is that of Small ribosomal subunit protein bS18 from Clostridium novyi (strain NT).